Consider the following 477-residue polypeptide: Aspartyl/glutamyl-tRNA(Asn/Gln) amidotransferase subunit B (477 aa).

Belongs to the GatB/GatE family. GatB subfamily. As to quaternary structure, heterotrimer of A, B and C subunits.

It catalyses the reaction L-glutamyl-tRNA(Gln) + L-glutamine + ATP + H2O = L-glutaminyl-tRNA(Gln) + L-glutamate + ADP + phosphate + H(+). The catalysed reaction is L-aspartyl-tRNA(Asn) + L-glutamine + ATP + H2O = L-asparaginyl-tRNA(Asn) + L-glutamate + ADP + phosphate + 2 H(+). Allows the formation of correctly charged Asn-tRNA(Asn) or Gln-tRNA(Gln) through the transamidation of misacylated Asp-tRNA(Asn) or Glu-tRNA(Gln) in organisms which lack either or both of asparaginyl-tRNA or glutaminyl-tRNA synthetases. The reaction takes place in the presence of glutamine and ATP through an activated phospho-Asp-tRNA(Asn) or phospho-Glu-tRNA(Gln). In Streptococcus gordonii (strain Challis / ATCC 35105 / BCRC 15272 / CH1 / DL1 / V288), this protein is Aspartyl/glutamyl-tRNA(Asn/Gln) amidotransferase subunit B.